The following is a 470-amino-acid chain: Protein ASPARTIC PROTEASE IN GUARD CELL 2 (470 aa).

The N-terminal stretch at 1–19 is a signal peptide; that stretch reads MLLPLFFFFLHLHLHLSSS. A Peptidase A1 domain is found at 131 to 466; it reads YFVRIGVGSP…DGANGFVGFG (336 aa). Residue D149 is part of the active site. Disulfide bonds link C159/C162, C165/C239, C186/C204, C191/C199, C278/C470, and C389/C431. D350 is a catalytic residue.

This sequence belongs to the peptidase A1 family.

Aspartic protease that may be involved in drought avoidance through abscisic acid signaling. This chain is Protein ASPARTIC PROTEASE IN GUARD CELL 2 (ASPG2), found in Arabidopsis thaliana (Mouse-ear cress).